The sequence spans 175 residues: Co-chaperone protein HscB homolog (175 aa).

Residues 7-79 (SHFELFHLPA…LKRATYLLHL (73 aa)) enclose the J domain.

This sequence belongs to the HscB family. As to quaternary structure, interacts with HscA and stimulates its ATPase activity.

In terms of biological role, co-chaperone involved in the maturation of iron-sulfur cluster-containing proteins. Seems to help targeting proteins to be folded toward HscA. The polypeptide is Co-chaperone protein HscB homolog (Burkholderia thailandensis (strain ATCC 700388 / DSM 13276 / CCUG 48851 / CIP 106301 / E264)).